Consider the following 359-residue polypeptide: uncharacterized protein (359 aa).

A run of 6 helical transmembrane segments spans residues 4 to 24 (ELFV…HLFK), 36 to 56 (FQAV…VFGF), 68 to 88 (IPIM…ALAM), 94 to 114 (LLIT…IAAI), 129 to 149 (HAFY…YFLI), and 155 to 175 (ELHL…LYII). A GGDEF domain is found at 223-357 (FQFALIYMDI…GRNRVCFSEK (135 aa)).

Its subcellular location is the cell membrane. This is an uncharacterized protein from Bacillus subtilis (strain 168).